Consider the following 177-residue polypeptide: ATP synthase subunit delta (177 aa).

The protein belongs to the ATPase delta chain family. In terms of assembly, F-type ATPases have 2 components, F(1) - the catalytic core - and F(0) - the membrane proton channel. F(1) has five subunits: alpha(3), beta(3), gamma(1), delta(1), epsilon(1). F(0) has three main subunits: a(1), b(2) and c(10-14). The alpha and beta chains form an alternating ring which encloses part of the gamma chain. F(1) is attached to F(0) by a central stalk formed by the gamma and epsilon chains, while a peripheral stalk is formed by the delta and b chains.

The protein localises to the cell membrane. In terms of biological role, f(1)F(0) ATP synthase produces ATP from ADP in the presence of a proton or sodium gradient. F-type ATPases consist of two structural domains, F(1) containing the extramembraneous catalytic core and F(0) containing the membrane proton channel, linked together by a central stalk and a peripheral stalk. During catalysis, ATP synthesis in the catalytic domain of F(1) is coupled via a rotary mechanism of the central stalk subunits to proton translocation. Its function is as follows. This protein is part of the stalk that links CF(0) to CF(1). It either transmits conformational changes from CF(0) to CF(1) or is implicated in proton conduction. The sequence is that of ATP synthase subunit delta from Buchnera aphidicola subsp. Acyrthosiphon pisum (strain 5A).